Reading from the N-terminus, the 378-residue chain is MNKPLRNSHPLFKIANNALVDLPAPINISSWWNFGSLLGLCLIIQILTGLFLAMHYTADINLAFYSVNHICRDVNYGWLLRTLHANGASFFFICIYLHVGRGIYYGSYMFTPTWLIGVIILFLVMGTAFMGYVLPWGQMSFWGATVITNLLSAIPYLGMDLVQWLWGGFAVDNATLTRFFTFHFILPFIVLAMTMIHLLFLHQTGSNNPIGLNSNIDKIPFHPYFTFKDIVGFIVMIFILISLVLISPNLLGDPDNFIPANPLVTPAHIQPEWYFLFAYAILRSIPNKLGGVIALVLSIAILMILPFYNLSKFRGIQFYPINQVMFWSMLVTVILLTWIGARPVEEPYVLIGQILTVVYFLYYLVNPLITKWWDNLLN.

A run of 4 helical transmembrane segments spans residues 34–54, 78–99, 114–134, and 179–199; these read FGSLLGLCLIIQILTGLFLAM, WLLRTLHANGASFFFICIYLHV, WLIGVIILFLVMGTAFMGYVL, and FFTFHFILPFIVLAMTMIHLL. 2 residues coordinate heme b: His-84 and His-98. 2 residues coordinate heme b: His-183 and His-197. His-202 lines the a ubiquinone pocket. 4 helical membrane passes run 227-247, 289-309, 321-341, and 348-368; these read FKDIVGFIVMIFILISLVLIS, LGGVIALVLSIAILMILPFYN, INQVMFWSMLVTVILLTWIGA, and YVLIGQILTVVYFLYYLVNPL.

It belongs to the cytochrome b family. As to quaternary structure, the main subunits of complex b-c1 are: cytochrome b, cytochrome c1 and the Rieske protein. Heme b is required as a cofactor.

Its subcellular location is the mitochondrion inner membrane. Functionally, component of the ubiquinol-cytochrome c reductase complex (complex III or cytochrome b-c1 complex) that is part of the mitochondrial respiratory chain. The b-c1 complex mediates electron transfer from ubiquinol to cytochrome c. Contributes to the generation of a proton gradient across the mitochondrial membrane that is then used for ATP synthesis. The sequence is that of Cytochrome b (mt:Cyt-b) from Drosophila simulans (Fruit fly).